The chain runs to 328 residues: DNA-directed RNA polymerase subunit alpha (328 aa).

Positions 1–232 (MSTQGFLKPR…DQISVFAALE (232 aa)) are alpha N-terminal domain (alpha-NTD). Positions 248–328 (IDPVLLRPVD…NWPPLGLERP (81 aa)) are alpha C-terminal domain (alpha-CTD).

This sequence belongs to the RNA polymerase alpha chain family. As to quaternary structure, homodimer. The RNAP catalytic core consists of 2 alpha, 1 beta, 1 beta' and 1 omega subunit. When a sigma factor is associated with the core the holoenzyme is formed, which can initiate transcription.

It catalyses the reaction RNA(n) + a ribonucleoside 5'-triphosphate = RNA(n+1) + diphosphate. DNA-dependent RNA polymerase catalyzes the transcription of DNA into RNA using the four ribonucleoside triphosphates as substrates. The chain is DNA-directed RNA polymerase subunit alpha from Bordetella petrii (strain ATCC BAA-461 / DSM 12804 / CCUG 43448).